A 32-amino-acid chain; its full sequence is Small ribosomal subunit protein uS19 (32 aa).

It belongs to the universal ribosomal protein uS19 family.

Protein S19 forms a complex with S13 that binds strongly to the 16S ribosomal RNA. The chain is Small ribosomal subunit protein uS19 (rpsS) from Yersinia enterocolitica.